The following is a 71-amino-acid chain: Small, acid-soluble spore protein I (71 aa).

Belongs to the SspI family.

The protein resides in the spore core. The protein is Small, acid-soluble spore protein I of Geobacillus sp. (strain WCH70).